A 438-amino-acid polypeptide reads, in one-letter code: Adenylosuccinate synthetase (438 aa).

Residues 13 to 19 (GDEGKGK) and 41 to 43 (GHT) each bind GTP. Asp14 acts as the Proton acceptor in catalysis. Mg(2+) contacts are provided by Asp14 and Gly41. Residues 14–17 (DEGK), 39–42 (NAGH), Thr130, Arg144, Gln225, Thr240, and Arg312 contribute to the IMP site. The active-site Proton donor is His42. 308–314 (ATTGRQR) lines the substrate pocket. GTP contacts are provided by residues Arg314, 340–342 (KLD), and 422–424 (STG).

Belongs to the adenylosuccinate synthetase family. Homodimer. Mg(2+) is required as a cofactor.

Its subcellular location is the cytoplasm. The catalysed reaction is IMP + L-aspartate + GTP = N(6)-(1,2-dicarboxyethyl)-AMP + GDP + phosphate + 2 H(+). It functions in the pathway purine metabolism; AMP biosynthesis via de novo pathway; AMP from IMP: step 1/2. Functionally, plays an important role in the de novo pathway of purine nucleotide biosynthesis. Catalyzes the first committed step in the biosynthesis of AMP from IMP. The sequence is that of Adenylosuccinate synthetase from Vesicomyosocius okutanii subsp. Calyptogena okutanii (strain HA).